A 271-amino-acid polypeptide reads, in one-letter code: Phosphonates import ATP-binding protein PhnC 2 (271 aa).

In terms of domain architecture, ABC transporter spans 2–245; the sequence is LTIDKLTKRF…VARDIYGAGA (244 aa). Residue 34–41 coordinates ATP; sequence GRSGAGKS.

It belongs to the ABC transporter superfamily. Phosphonates importer (TC 3.A.1.9.1) family. The complex is composed of two ATP-binding proteins (PhnC), two transmembrane proteins (PhnE) and a solute-binding protein (PhnD).

The protein localises to the cell inner membrane. The enzyme catalyses phosphonate(out) + ATP + H2O = phosphonate(in) + ADP + phosphate + H(+). Its function is as follows. Part of the ABC transporter complex PhnCDE involved in phosphonates import. Responsible for energy coupling to the transport system. The sequence is that of Phosphonates import ATP-binding protein PhnC 2 from Roseobacter denitrificans (strain ATCC 33942 / OCh 114) (Erythrobacter sp. (strain OCh 114)).